The chain runs to 231 residues: MTIEKKFVADGVRKVRVEQYLNKELKRAGYGGMDIVRTPVGTQVTIFAEKPGIVIGKGGKLVRQLTTDLSTVYGIESPQVEVQQVANPNLNAQIMAERLANALERGWYFRKAGTSVIRRVMDSGALGCEVIIAGKLTGARARVQKFVEGYIKHSGEPSESIVEKGYATAIKKLGIIGVQVKIVPPGAKLPDQFEIRADAAPAPARVVETDIFEEFDAELAAEPEPEFVEEV.

The region spanning 17-86 is the KH type-2 domain; the sequence is VEQYLNKELK…SPQVEVQQVA (70 aa).

This sequence belongs to the universal ribosomal protein uS3 family. Part of the 30S ribosomal subunit.

In terms of biological role, binds the lower part of the 30S subunit head. This chain is Small ribosomal subunit protein uS3, found in Methanocorpusculum labreanum (strain ATCC 43576 / DSM 4855 / Z).